We begin with the raw amino-acid sequence, 952 residues long: 2-oxoglutarate dehydrogenase E1 component (952 aa).

This sequence belongs to the alpha-ketoglutarate dehydrogenase family. As to quaternary structure, homodimer. Part of the 2-oxoglutarate dehydrogenase (OGDH) complex composed of E1 (2-oxoglutarate dehydrogenase), E2 (dihydrolipoamide succinyltransferase) and E3 (dihydrolipoamide dehydrogenase); the complex contains multiple copies of the three enzymatic components (E1, E2 and E3). The cofactor is thiamine diphosphate.

The enzyme catalyses N(6)-[(R)-lipoyl]-L-lysyl-[protein] + 2-oxoglutarate + H(+) = N(6)-[(R)-S(8)-succinyldihydrolipoyl]-L-lysyl-[protein] + CO2. Its function is as follows. E1 component of the 2-oxoglutarate dehydrogenase (OGDH) complex which catalyzes the decarboxylation of 2-oxoglutarate, the first step in the conversion of 2-oxoglutarate to succinyl-CoA and CO(2). This is 2-oxoglutarate dehydrogenase E1 component from Geobacillus sp. (strain WCH70).